Consider the following 705-residue polypeptide: MAKTDLHLTRNIGIMAHIDAGKTTTSERILFYTGLTHKIGEVHDGAATMDWMEQEQERGITITSAATTTRWKYAGDTYKINLIDTPGHVDFTAEVERSLRILDGAVAAYCAVGGVEPQSETVWRQADKYNVPRIAYVNKMDRSGADFFEVVRQMKAVLGANPCPIVVPIGAEETFKGLVDLIKMKAIYWHDETMGADYTVEEIPADLVDEANEWRDKMLEKVAEFDDALMEKYFDDPSTITEEEVLRALRNATVQMAVVPMLCGSSFKNKGVQTLLDYVCAFLPSPLDTENVIGTNPNTGAEEDRKPSDDEKTSALAFKIATDPYVGRLTFFRVYSGKIEAGSYIYNSRSGKKERVSRLFQMHSNKQNPVEVIGAGDIGAGVGFKDIHTGDTLCDETAPIVLESMDFPEPVIGIAVEPKTQKDMDKLSNGLAKLAEEDPTFTVKTDEQTGQTVISGMGELHLDIIIDRLKREFKVECNQGKPQVNYKEAITKTVDLREVYKKQSGGRGKFADIIVKIGPVDEDFKEGGLQFIDEVKGGNIPKEFIPSVQKGFTSAMKNGVLAGYPLDSMKVTLIDGSFHPVDSDQLSFEICAIQAYKNACAKAGPVLMEPIMKLEVVTPEENMGDVIGDLNKRRGQVEGMESSRSGARIVKAMVPLAEMFGYVTALRTITSGRATSSMVYSHHAQVSNSIAKAVLEEVKGRADLL.

Residues 7-287 (HLTRNIGIMA…YVCAFLPSPL (281 aa)) form the tr-type G domain. Residues 16–23 (AHIDAGKT), 84–88 (DTPGH), and 138–141 (NKMD) contribute to the GTP site.

It belongs to the TRAFAC class translation factor GTPase superfamily. Classic translation factor GTPase family. EF-G/EF-2 subfamily.

The protein resides in the cytoplasm. Its function is as follows. Catalyzes the GTP-dependent ribosomal translocation step during translation elongation. During this step, the ribosome changes from the pre-translocational (PRE) to the post-translocational (POST) state as the newly formed A-site-bound peptidyl-tRNA and P-site-bound deacylated tRNA move to the P and E sites, respectively. Catalyzes the coordinated movement of the two tRNA molecules, the mRNA and conformational changes in the ribosome. The polypeptide is Elongation factor G (Bacteroides thetaiotaomicron (strain ATCC 29148 / DSM 2079 / JCM 5827 / CCUG 10774 / NCTC 10582 / VPI-5482 / E50)).